The primary structure comprises 477 residues: Secreted RxLR effector protein 102 (477 aa).

Positions 1-20 are cleaved as a signal peptide; the sequence is MRGGYYVLTALFVVASSEIA. Positions 48–65 match the RxLR-dEER motif; that stretch reads RFLRESRGVHGNVANEER. Disordered regions lie at residues 326 to 345, 351 to 370, 376 to 401, and 433 to 455; these read SKGQIPYPSEPLNAASTSKG, IKRSKRTSDGNTDIASLPSI, SSKSVMPLLTESTTSGDHSVPAKRSR, and PRSAVDPYTQSKKHSTKALAPSS.

This sequence belongs to the RxLR effector family.

It is found in the secreted. It localises to the host nucleus. Its function is as follows. Secreted effector that acts as an elicitor that induces cell death in host plant cells. The protein is Secreted RxLR effector protein 102 of Plasmopara viticola (Downy mildew of grapevine).